Here is a 63-residue protein sequence, read N- to C-terminus: Large ribosomal subunit protein bL35 (63 aa).

This sequence belongs to the bacterial ribosomal protein bL35 family.

This is Large ribosomal subunit protein bL35 from Campylobacter jejuni subsp. jejuni serotype O:2 (strain ATCC 700819 / NCTC 11168).